The primary structure comprises 375 residues: Erythronate-4-phosphate dehydrogenase (375 aa).

Substrate contacts are provided by Ser-45 and Thr-67. Asp-147 serves as a coordination point for NAD(+). Residue Arg-209 is part of the active site. Residue Asp-233 participates in NAD(+) binding. Glu-238 is an active-site residue. Catalysis depends on His-255, which acts as the Proton donor. Gly-258 is an NAD(+) binding site. Tyr-259 lines the substrate pocket.

This sequence belongs to the D-isomer specific 2-hydroxyacid dehydrogenase family. PdxB subfamily. Homodimer.

It localises to the cytoplasm. The enzyme catalyses 4-phospho-D-erythronate + NAD(+) = (R)-3-hydroxy-2-oxo-4-phosphooxybutanoate + NADH + H(+). It participates in cofactor biosynthesis; pyridoxine 5'-phosphate biosynthesis; pyridoxine 5'-phosphate from D-erythrose 4-phosphate: step 2/5. Catalyzes the oxidation of erythronate-4-phosphate to 3-hydroxy-2-oxo-4-phosphonooxybutanoate. The protein is Erythronate-4-phosphate dehydrogenase of Shewanella amazonensis (strain ATCC BAA-1098 / SB2B).